We begin with the raw amino-acid sequence, 528 residues long: Probable histone-arginine methyltransferase 1.4 (528 aa).

Met-1 carries the post-translational modification N-acetylmethionine. The SAM-dependent MTase PRMT-type domain maps to 144-459; the sequence is EAASAKMYFH…QSYTINLTLS (316 aa). The S-adenosyl-L-methionine site is built by Gln-161, Arg-170, Gly-194, Glu-216, and Glu-246. Residues Glu-260 and Glu-269 contribute to the active site. Thr-274 contributes to the S-adenosyl-L-methionine binding site.

It belongs to the class I-like SAM-binding methyltransferase superfamily. Protein arginine N-methyltransferase family.

It is found in the nucleus. It localises to the cytoplasm. It carries out the reaction L-arginyl-[protein] + 2 S-adenosyl-L-methionine = N(omega),N(omega)-dimethyl-L-arginyl-[protein] + 2 S-adenosyl-L-homocysteine + 2 H(+). Functionally, methylates (mono- and asymmetric dimethylation) the guanidino nitrogens of arginyl residues in several proteins involved in DNA packaging, transcription regulation, and mRNA stability. Recruited to promoters upon gene activation, methylates histone H3 and activates transcription via chromatin remodeling. The protein is Probable histone-arginine methyltransferase 1.4 (PRMT14) of Arabidopsis thaliana (Mouse-ear cress).